Consider the following 267-residue polypeptide: NAD kinase 1 (267 aa).

Residue Asp45 is the Proton acceptor of the active site. Residues 45-46 (DG), 122-123 (NE), Arg149, Asp151, and Ala186 contribute to the NAD(+) site.

The protein belongs to the NAD kinase family. The cofactor is a divalent metal cation.

Its subcellular location is the cytoplasm. The catalysed reaction is NAD(+) + ATP = ADP + NADP(+) + H(+). Its function is as follows. Involved in the regulation of the intracellular balance of NAD and NADP, and is a key enzyme in the biosynthesis of NADP. Catalyzes specifically the phosphorylation on 2'-hydroxyl of the adenosine moiety of NAD to yield NADP. The polypeptide is NAD kinase 1 (Oceanobacillus iheyensis (strain DSM 14371 / CIP 107618 / JCM 11309 / KCTC 3954 / HTE831)).